Consider the following 381-residue polypeptide: Arrestin homolog (381 aa).

This sequence belongs to the arrestin family.

The protein is Arrestin homolog of Heliothis virescens (Tobacco budworm moth).